We begin with the raw amino-acid sequence, 356 residues long: S-adenosylmethionine:tRNA ribosyltransferase-isomerase (356 aa).

This sequence belongs to the QueA family. As to quaternary structure, monomer.

It localises to the cytoplasm. It carries out the reaction 7-aminomethyl-7-carbaguanosine(34) in tRNA + S-adenosyl-L-methionine = epoxyqueuosine(34) in tRNA + adenine + L-methionine + 2 H(+). Its pathway is tRNA modification; tRNA-queuosine biosynthesis. Transfers and isomerizes the ribose moiety from AdoMet to the 7-aminomethyl group of 7-deazaguanine (preQ1-tRNA) to give epoxyqueuosine (oQ-tRNA). In Yersinia pestis, this protein is S-adenosylmethionine:tRNA ribosyltransferase-isomerase.